Reading from the N-terminus, the 663-residue chain is Forkhead protein sep1 (663 aa).

The fork-head DNA-binding region spans 128–222 (KPPYSYAMLI…LKLKLRKPGV (95 aa)). Disordered regions lie at residues 220–241 (PGVN…KYGS) and 325–387 (SPLQ…DVET). The segment covering 340–355 (SPASSASPSESLRNES) has biased composition (low complexity). S446 carries the phosphoserine modification.

The protein localises to the nucleus. Its function is as follows. Required for promoter sequence element PCB-driven, M-phase-specific transcription. Acts as a transcriptional activator with a role in the regulation of mitosis. Regulates septation and the periodic transcription of cdc15. This Schizosaccharomyces pombe (strain 972 / ATCC 24843) (Fission yeast) protein is Forkhead protein sep1 (sep1).